A 488-amino-acid polypeptide reads, in one-letter code: Inosine-5'-monophosphate dehydrogenase (488 aa).

2 CBS domains span residues 95–153 (VITN…SMKI) and 157–214 (MTKE…PNSS). NAD(+) contacts are provided by residues Asp-251 and 301–303 (GIG). K(+) is bound by residues Gly-303 and Gly-305. Ser-306 serves as a coordination point for IMP. Residue Cys-308 participates in K(+) binding. Cys-308 serves as the catalytic Thioimidate intermediate. Residues 341 to 343 (DGG), 364 to 365 (GS), and 388 to 392 (YRGMG) each bind IMP. Arg-404 (proton acceptor) is an active-site residue. Glu-416 lines the IMP pocket. Glu-470, Ser-471, and His-472 together coordinate K(+).

This sequence belongs to the IMPDH/GMPR family. As to quaternary structure, homotetramer. K(+) is required as a cofactor.

The catalysed reaction is IMP + NAD(+) + H2O = XMP + NADH + H(+). The protein operates within purine metabolism; XMP biosynthesis via de novo pathway; XMP from IMP: step 1/1. Its activity is regulated as follows. Mycophenolic acid (MPA) is a non-competitive inhibitor that prevents formation of the closed enzyme conformation by binding to the same site as the amobile flap. In contrast, mizoribine monophosphate (MZP) is a competitive inhibitor that induces the closed conformation. MPA is a potent inhibitor of mammalian IMPDHs but a poor inhibitor of the bacterial enzymes. MZP is a more potent inhibitor of bacterial IMPDH. In terms of biological role, catalyzes the conversion of inosine 5'-phosphate (IMP) to xanthosine 5'-phosphate (XMP), the first committed and rate-limiting step in the de novo synthesis of guanine nucleotides, and therefore plays an important role in the regulation of cell growth. The polypeptide is Inosine-5'-monophosphate dehydrogenase (Bacillus subtilis (strain 168)).